Consider the following 688-residue polypeptide: ATP-dependent zinc metalloprotease FTSH 6, chloroplastic (688 aa).

Residues 1–75 (MKMASSSSAL…GFTSALGTVL (75 aa)) constitute a chloroplast transit peptide. The span at 25–36 (QQFQKPASLSKS) shows a compositional bias: polar residues. A disordered region spans residues 25–44 (QQFQKPASLSKSSHTHKPSL). Residues 76-83 (AHPAKAEP) constitute a thylakoid transit peptide. The Lumenal, thylakoid portion of the chain corresponds to 84–168 (EAPIEATSNR…AHPMNVNWGA (85 aa)). Residues 169 to 189 (FLLNFLGNLGFPLILLVSLLL) form a helical membrane-spanning segment. Topologically, residues 190-688 (TSSSRRNPAG…RIRINDLISV (499 aa)) are stromal. ATP is bound at residue 264–271 (GPPGTGKT). Position 485 (H485) interacts with Zn(2+). E486 is a catalytic residue. Zn(2+) contacts are provided by H489 and D563.

It in the N-terminal section; belongs to the AAA ATPase family. The protein in the C-terminal section; belongs to the peptidase M41 family. Requires Zn(2+) as cofactor.

Its subcellular location is the plastid. The protein resides in the chloroplast thylakoid membrane. Its function is as follows. Probable ATP-dependent zinc metallopeptidase. Involved in the degradation of the light-harvesting complex of photosystem II (LHC II) during senescence or high light acclimation. The polypeptide is ATP-dependent zinc metalloprotease FTSH 6, chloroplastic (FTSH6) (Arabidopsis thaliana (Mouse-ear cress)).